The following is a 130-amino-acid chain: ATP synthase epsilon chain (130 aa).

This sequence belongs to the ATPase epsilon chain family. As to quaternary structure, F-type ATPases have 2 components, CF(1) - the catalytic core - and CF(0) - the membrane proton channel. CF(1) has five subunits: alpha(3), beta(3), gamma(1), delta(1), epsilon(1). CF(0) has three main subunits: a, b and c.

The protein resides in the cell inner membrane. Functionally, produces ATP from ADP in the presence of a proton gradient across the membrane. The chain is ATP synthase epsilon chain from Sulfurimonas denitrificans (strain ATCC 33889 / DSM 1251) (Thiomicrospira denitrificans (strain ATCC 33889 / DSM 1251)).